Consider the following 349-residue polypeptide: MDTIAARALTVMRACATLQEARIVLEANVMEILGIAINRYNGLTLRGVTMRPTSLAQRNEMFFMCLDMMLSAAGINVGPISPDYTQHMATIGVLATPEIPFTTEAANEIARVTGETSTWGPARQPYGFFLETEETFQPGRWFMRAAQAATAVVCGPDMIQVSLNAGARGDVQQIFQGRNDPMMIYLVWRRIENFAMAQGNSQQTQAGVTVSVGGVDMRAGRIIAWDGQAALHVRNPTQQNAMVQIQVVFYISMDKTLNQYPALTAEIFNVYSFRDHTWHGLRTAIRNRTTLPNMLPPIFPPNDRDSILTLLLLSTLADVYTVLRPEFAMHGVNPMPWPLTAAIARAAYV.

N-linked (GlcNAc...) asparagine; by host glycosylation is present at asparagine 287.

Belongs to the orbivirus VP7 family. As to quaternary structure, homotrimer that assemble in a complex of 260 capsomers on an inner scaffold composed of VP3.

It localises to the virion. Functionally, the VP7 protein is one of the five proteins (with VP1, VP3, VP4, and VP6) which form the inner capsid of the virus. The protein is Core protein VP7 (Segment-7) of Antilocapra americana (Pronghorn).